Reading from the N-terminus, the 609-residue chain is Dihydroxy-acid dehydratase (609 aa).

Asp81 provides a ligand contact to Mg(2+). Position 122 (Cys122) interacts with [2Fe-2S] cluster. Residues Asp123 and Lys124 each contribute to the Mg(2+) site. Lys124 carries the N6-carboxylysine modification. Cys195 lines the [2Fe-2S] cluster pocket. Glu491 contacts Mg(2+). The Proton acceptor role is filled by Ser517.

It belongs to the IlvD/Edd family. In terms of assembly, homodimer. It depends on [2Fe-2S] cluster as a cofactor. The cofactor is Mg(2+).

The enzyme catalyses (2R)-2,3-dihydroxy-3-methylbutanoate = 3-methyl-2-oxobutanoate + H2O. It catalyses the reaction (2R,3R)-2,3-dihydroxy-3-methylpentanoate = (S)-3-methyl-2-oxopentanoate + H2O. The protein operates within amino-acid biosynthesis; L-isoleucine biosynthesis; L-isoleucine from 2-oxobutanoate: step 3/4. It participates in amino-acid biosynthesis; L-valine biosynthesis; L-valine from pyruvate: step 3/4. Its function is as follows. Functions in the biosynthesis of branched-chain amino acids. Catalyzes the dehydration of (2R,3R)-2,3-dihydroxy-3-methylpentanoate (2,3-dihydroxy-3-methylvalerate) into 2-oxo-3-methylpentanoate (2-oxo-3-methylvalerate) and of (2R)-2,3-dihydroxy-3-methylbutanoate (2,3-dihydroxyisovalerate) into 2-oxo-3-methylbutanoate (2-oxoisovalerate), the penultimate precursor to L-isoleucine and L-valine, respectively. This Acinetobacter baumannii (strain AB307-0294) protein is Dihydroxy-acid dehydratase.